Consider the following 210-residue polypeptide: Large ribosomal subunit protein uL3 (210 aa).

A disordered region spans residues 133-156; sequence ASHGNSLSHRVPGSIGQNQTPGKV. Gln-151 is modified (N5-methylglutamine).

It belongs to the universal ribosomal protein uL3 family. As to quaternary structure, part of the 50S ribosomal subunit. Forms a cluster with proteins L14 and L19. Post-translationally, methylated by PrmB.

One of the primary rRNA binding proteins, it binds directly near the 3'-end of the 23S rRNA, where it nucleates assembly of the 50S subunit. This Hamiltonella defensa subsp. Acyrthosiphon pisum (strain 5AT) protein is Large ribosomal subunit protein uL3.